Reading from the N-terminus, the 968-residue chain is MKRMLINATQQEELRVALVDGQRLYDLDIESSRSEQKKSNIYKGKITRIEPSLEAVFIDYGMEKHGFLPLKEISKNYFPENYNCDVRLNIKDILREGQELIVQINKEERGTKGAALTTFITLAGSYLVLMPNNPKIAGISRRVEGSDRIELKELLSSLKIPEKMGLIIRTAGVGKSIKSLQWDLSLRLKHWNAIKKASKKKSAPFLIYQESNVIVRAFRDYLRQDIGEILIDNPKILDIAREHITALGRPDFINKIKLYTGEIPLFSYYQIESQIDSAFQRKVRLPSGGSIMVDTTEALTAIDINSSRSTRGADIETTAFNTNLEAVEEISRQLRLRDLGGLIVIDFIDMTTISHQKIIENKLREIVREDRARIQIGHISKFGLLEMSRQRLSSSLGESSHHICPRCTGTGTIRDNESLSLSILRLIEEEALKENTYEVHAIVPIEIACYLLNEKREAVYAIEKRQAGGKTIIVPNKNMKTPHYLVSRIRKGEQIRSMSYCLSNVRKNKIFNNIKKEIVDKKHKLNSTLTNISLSDDSFDKQKEEKEKFLRKKNYNNSIINALFNNKNLFFKFIVWIKNSFLKKHIFVKNESFKRNIFQNKKNILFAKKEEFNSIEEIHKKDNQVSSIDNNKKKQLLNKVKKNNNHQYSHVFDNNTKYTSLKKIDFQKNTIDFELNSLNFLKKNNFYIFSKYNFLYTKKYAKNKFKDFENIKSQNDMICYESFQKDLENNTSFKKKLLYNIIFNNCYPNNILVNINSTIFQIYKNSEFFKFFPIKISILMTPLNIFSLELILEPSSKKCSSFKENQVKKRLRINNYKKLNSSFIHKKNNFVKNSVLWPKKFTTEEIKINHLYKKNKKNTKSYFFETSFKYKTVTKNISKLKVKLTSKKNDYLISNQKKLFLNKTLKKENTKNKSSAPITKIFSDVFLSKNQKIMNSSIFLKKSNKKIKNSAGAHSATNFSTSPVKKSE.

The region spanning S39–F119 is the S1 motif domain. Positions 303 and 346 each coordinate Mg(2+). Residues C404 and C407 each coordinate Zn(2+). The required for zinc-mediated homotetramerization and catalytic activity stretch occupies residues C404–C407. The segment at I947 to E968 is disordered. Residues S955 to E968 show a composition bias toward polar residues.

It belongs to the RNase E/G family. RNase E subfamily. As to quaternary structure, component of the RNA degradosome, which is a multiprotein complex involved in RNA processing and mRNA degradation. Within the RNA degradosome, RNase E assembles into a homotetramer formed by a dimer of dimers. Zn(2+) is required as a cofactor. The cofactor is Mg(2+).

It is found in the cytoplasm. Its subcellular location is the cell inner membrane. The enzyme catalyses Endonucleolytic cleavage of single-stranded RNA in A- and U-rich regions.. Functionally, endoribonuclease that plays a central role in RNA processing and decay. Required for the maturation of 5S and 16S rRNAs and the majority of tRNAs. Also involved in the degradation of most mRNAs. This is Ribonuclease E from Buchnera aphidicola subsp. Schizaphis graminum (strain Sg).